Here is a 448-residue protein sequence, read N- to C-terminus: Asparagine--tRNA ligase (448 aa).

It belongs to the class-II aminoacyl-tRNA synthetase family. In terms of assembly, homodimer.

It is found in the cytoplasm. The enzyme catalyses tRNA(Asn) + L-asparagine + ATP = L-asparaginyl-tRNA(Asn) + AMP + diphosphate + H(+). This chain is Asparagine--tRNA ligase, found in Streptococcus pyogenes serotype M12 (strain MGAS9429).